The following is a 1687-amino-acid chain: Protein TOPAZ1 (1687 aa).

Disordered regions lie at residues 1 to 131 (MRRP…QPGF), 319 to 339 (EESS…KADE), 596 to 632 (LSRS…GNLT), and 880 to 916 (TSEV…SDDL). Gly residues predominate over residues 31-41 (GAAGGCGPEAG). Positions 80 to 113 (RRVEGRRGQVSPSDRRGLEAAKEAEFPLQTERHT) are enriched in basic and acidic residues. A compositionally biased stretch (polar residues) spans 598 to 622 (RSGSEVISNTTEDTQLTSDTQSLTG). Positions 897–916 (QSTDSKYVETPVKKEPSDDL) are enriched in basic and acidic residues.

It localises to the cytoplasm. It is found in the cytosol. Functionally, important for normal spermatogenesis and male fertility. Specifically required for progression to the post-meiotic stages of spermatocyte development. Seems to be necessary for normal expression levels of a number of testis-expressed gene transcripts, although its role in this process is unclear. The polypeptide is Protein TOPAZ1 (TOPAZ1) (Macaca fascicularis (Crab-eating macaque)).